The sequence spans 194 residues: Imidazoleglycerol-phosphate dehydratase (194 aa).

This sequence belongs to the imidazoleglycerol-phosphate dehydratase family.

The protein resides in the cytoplasm. The catalysed reaction is D-erythro-1-(imidazol-4-yl)glycerol 3-phosphate = 3-(imidazol-4-yl)-2-oxopropyl phosphate + H2O. It functions in the pathway amino-acid biosynthesis; L-histidine biosynthesis; L-histidine from 5-phospho-alpha-D-ribose 1-diphosphate: step 6/9. This is Imidazoleglycerol-phosphate dehydratase from Chlorobaculum tepidum (strain ATCC 49652 / DSM 12025 / NBRC 103806 / TLS) (Chlorobium tepidum).